The chain runs to 253 residues: uncharacterized protein (253 aa).

Ile17, Ser36, Asp62, Asn89, Tyr158, Lys162, Val191, and Thr193 together coordinate NADP(+). Tyr158 serves as the catalytic Proton donor. The active-site Lowers pKa of active site Tyr is the Lys162.

This sequence belongs to the short-chain dehydrogenases/reductases (SDR) family.

It is found in the cytoplasm. It localises to the nucleus. This is an uncharacterized protein from Schizosaccharomyces pombe (strain 972 / ATCC 24843) (Fission yeast).